Consider the following 88-residue polypeptide: Insulin-related peptide 4 (88 aa).

An N-terminal signal peptide occupies residues 1 to 19 (MKLTLIILLVVAYSWCSEA). The propeptide occupies 20–45 (QNEARVFCGRVLSERLAALCWGPNSV). Arg-65 bears the Arginine amide mark. Residues 69 to 88 (GLATECCDKACTVEELLSYC) constitute a propeptide that is removed on maturation.

The protein belongs to the insulin family. In terms of tissue distribution, DAGWWLTRGAARSLGGVR-amide: Expressed in corpora cardiaca (CC), corpora allata (CA), antennal lobe (AL) and gnathal ganglion (GNG) (at protein level). Expression in CC and CA detected in most animals, in AL and GNG in few animals (at protein level).

The protein resides in the secreted. The protein is Insulin-related peptide 4 of Agrotis ipsilon (Black cutworm moth).